Here is a 173-residue protein sequence, read N- to C-terminus: uncharacterized protein (173 aa).

This is an uncharacterized protein from Saccharomyces cerevisiae (strain ATCC 204508 / S288c) (Baker's yeast).